The sequence spans 210 residues: Dephospho-CoA kinase (210 aa).

The region spanning 15–210 (VLGLTGGIGC…HKGYLKLALK (196 aa)) is the DPCK domain. 23–28 (GCGKTA) lines the ATP pocket.

This sequence belongs to the CoaE family.

It localises to the cytoplasm. It catalyses the reaction 3'-dephospho-CoA + ATP = ADP + CoA + H(+). It participates in cofactor biosynthesis; coenzyme A biosynthesis; CoA from (R)-pantothenate: step 5/5. Functionally, catalyzes the phosphorylation of the 3'-hydroxyl group of dephosphocoenzyme A to form coenzyme A. This Pseudoalteromonas translucida (strain TAC 125) protein is Dephospho-CoA kinase.